A 202-amino-acid chain; its full sequence is Large ribosomal subunit protein bL25 (202 aa).

This sequence belongs to the bacterial ribosomal protein bL25 family. CTC subfamily. In terms of assembly, part of the 50S ribosomal subunit; part of the 5S rRNA/L5/L18/L25 subcomplex. Contacts the 5S rRNA. Binds to the 5S rRNA independently of L5 and L18.

Its function is as follows. This is one of the proteins that binds to the 5S RNA in the ribosome where it forms part of the central protuberance. The chain is Large ribosomal subunit protein bL25 from Paramagnetospirillum magneticum (strain ATCC 700264 / AMB-1) (Magnetospirillum magneticum).